The chain runs to 128 residues: Histone H2A (128 aa).

The segment at 1–22 is disordered; it reads MSGRGKTGGKARAKAKTRSSRA. S2 is subject to N-acetylserine. S2 carries the phosphoserine modification. K6 carries the N6-(2-hydroxyisobutyryl)lysine modification. An N6-acetyllysine modification is found at K6. Residues 7–19 show a composition bias toward basic residues; the sequence is TGGKARAKAKTRS. The residue at position 10 (K10) is an N6-(2-hydroxyisobutyryl)lysine; alternate. An N6-lactoyllysine; alternate modification is found at K10. Position 10 is an N6-succinyllysine (K10). Glycyl lysine isopeptide (Lys-Gly) (interchain with G-Cter in ubiquitin) cross-links involve residues K14 and K16. Position 37 is an N6-(2-hydroxyisobutyryl)lysine; alternate (K37). 2 positions are modified to N6-(2-hydroxyisobutyryl)lysine: K75 and K76. An N6-(2-hydroxyisobutyryl)lysine; alternate modification is found at K96. At K96 the chain carries N6-succinyllysine. K96 carries the post-translational modification N6-glutaryllysine; alternate. Q105 carries the post-translational modification N5-methylglutamine. K119 is modified (N6-(2-hydroxyisobutyryl)lysine; alternate). N6-glutaryllysine; alternate occurs at positions 119, 120, and 126. K120 participates in a covalent cross-link: Glycyl lysine isopeptide (Lys-Gly) (interchain with G-Cter in ubiquitin).

In terms of assembly, the nucleosome is a histone octamer containing two molecules each of H2A, H2B, H3 and H4 assembled in one H3-H4 heterotetramer and two H2A-H2B heterodimers. The octamer wraps approximately 147 bp of DNA. Post-translationally, monoubiquitination of Lys-120 (H2AK119Ub) gives a specific tag for epigenetic transcriptional repression. Following DNA double-strand breaks (DSBs), it is ubiquitinated through 'Lys-63' linkage of ubiquitin moieties, leading to the recruitment of repair proteins to sites of DNA damage. H2AK119Ub and ionizing radiation-induced 'Lys-63'-linked ubiquitination are distinct events. Phosphorylation on Ser-2 is enhanced during mitosis. Phosphorylation on Ser-2 directly represses transcription. In terms of processing, glutamine methylation at Gln-105 (H2AQ104me) by FBL is specifically dedicated to polymerase I. It is present at 35S ribosomal DNA locus and impairs binding of the FACT complex. As to expression, expressed and secreted by skin epithelium.

The protein localises to the nucleus. The protein resides in the chromosome. Core component of nucleosome. Nucleosomes wrap and compact DNA into chromatin, limiting DNA accessibility to the cellular machineries which require DNA as a template. Histones thereby play a central role in transcription regulation, DNA repair, DNA replication and chromosomal stability. DNA accessibility is regulated via a complex set of post-translational modifications of histones, also called histone code, and nucleosome remodeling. Functionally, the secreted form has antibacterial activity against Gram-positive bacteria and antifungal activity against S.cerevisiae. The protein is Histone H2A of Oncorhynchus mykiss (Rainbow trout).